Consider the following 377-residue polypeptide: tRNA/tmRNA (uracil-C(5))-methyltransferase (377 aa).

Positions 199, 227, 232, 248, and 308 each coordinate S-adenosyl-L-methionine. C333 (nucleophile) is an active-site residue. Residue E367 is the Proton acceptor of the active site.

Belongs to the class I-like SAM-binding methyltransferase superfamily. RNA M5U methyltransferase family. TrmA subfamily.

The catalysed reaction is uridine(54) in tRNA + S-adenosyl-L-methionine = 5-methyluridine(54) in tRNA + S-adenosyl-L-homocysteine + H(+). It carries out the reaction uridine(341) in tmRNA + S-adenosyl-L-methionine = 5-methyluridine(341) in tmRNA + S-adenosyl-L-homocysteine + H(+). Functionally, dual-specificity methyltransferase that catalyzes the formation of 5-methyluridine at position 54 (m5U54) in all tRNAs, and that of position 341 (m5U341) in tmRNA (transfer-mRNA). The protein is tRNA/tmRNA (uracil-C(5))-methyltransferase of Aeromonas salmonicida (strain A449).